The following is a 329-amino-acid chain: 36 kDa antigen (329 aa).

A helical membrane pass occupies residues 11–31; sequence AILTGGGALLLGLIVLFYLAY.

Belongs to the membrane fusion protein (MFP) (TC 8.A.1) family.

The protein resides in the membrane. The chain is 36 kDa antigen from Helicobacter pylori (strain J99 / ATCC 700824) (Campylobacter pylori J99).